The primary structure comprises 655 residues: Acetyl-coenzyme A synthetase (655 aa).

CoA contacts are provided by residues 193–196 and threonine 313; that span reads RGNK. Residues 389–391, 413–418, aspartate 502, and arginine 517 contribute to the ATP site; these read GEP and DTWWQT. Serine 525 serves as a coordination point for CoA. Residue arginine 528 participates in ATP binding. Valine 539 and histidine 541 together coordinate Mg(2+). Arginine 586 contributes to the CoA binding site. Lysine 611 is modified (N6-acetyllysine).

The protein belongs to the ATP-dependent AMP-binding enzyme family. It depends on Mg(2+) as a cofactor. In terms of processing, acetylated. Deacetylation by the SIR2-homolog deacetylase activates the enzyme.

It carries out the reaction acetate + ATP + CoA = acetyl-CoA + AMP + diphosphate. In terms of biological role, catalyzes the conversion of acetate into acetyl-CoA (AcCoA), an essential intermediate at the junction of anabolic and catabolic pathways. AcsA undergoes a two-step reaction. In the first half reaction, AcsA combines acetate with ATP to form acetyl-adenylate (AcAMP) intermediate. In the second half reaction, it can then transfer the acetyl group from AcAMP to the sulfhydryl group of CoA, forming the product AcCoA. The chain is Acetyl-coenzyme A synthetase from Psychrobacter cryohalolentis (strain ATCC BAA-1226 / DSM 17306 / VKM B-2378 / K5).